The chain runs to 516 residues: MNLISKKNELKQGFYPLFFLEEFYTRVLIHMNHNHILKIGNIKESKLIHVNRICHYLLIKRLIRQIRKQSHKYNGISEFPNYETEFYFQYKNRFYNLIIENAFLLILQMIWQHQKTRKNDPSILIHRSIQSAFPFLEKKIIHCIWIIHGKIQLFHTIEQFNFLFLLLYERIRDKSFLHLLKNILNLNKEFLIEKFYCEKFHLIELSMFFRNLYINEFDSFIVYHIVKTWKLAYLLNPIKAIDDFSFIQKNDILLNIKRKQKRLPLVCWLANKSFYSLYGNIHYVRRDLSFLMAIQAGKHISRFWKYNCIKFLQLKLGFPCSLDVLYLKSLFNQDFLFLGYRIVNKLWKKNFKIRAVSWYSPILFFLKGRRISTKMPVFNLIDRLSVMHLCNLEGYPIHKAAWSVFNDKQIMNIFSNLLRNILFYYSGCSNRSDLGKIQYILEFSCMKTLAFKHKSSIRSTWTQYKKHVSFLSLVKNRHKNGKTSVDLYFLFQKTNKFWLLDLSKIQDSLACFILMD.

This sequence belongs to the intron maturase 2 family. MatK subfamily.

The protein localises to the plastid. Its subcellular location is the chloroplast. Its function is as follows. Usually encoded in the trnK tRNA gene intron. Probably assists in splicing its own and other chloroplast group II introns. This Chara vulgaris (Common stonewort) protein is Maturase K.